The sequence spans 338 residues: Tryptophan--tRNA ligase (338 aa).

Residues 11 to 13 (QPS) and 19 to 20 (GN) each bind ATP. The short motif at 12–20 (PSGELSIGN) is the 'HIGH' region element. Position 135 (Asp135) interacts with L-tryptophan. ATP-binding positions include 147–149 (GSD), Val189, and 198–202 (KMSKS). The 'KMSKS' region motif lies at 198–202 (KMSKS).

It belongs to the class-I aminoacyl-tRNA synthetase family. Homodimer.

It localises to the cytoplasm. The catalysed reaction is tRNA(Trp) + L-tryptophan + ATP = L-tryptophyl-tRNA(Trp) + AMP + diphosphate + H(+). In terms of biological role, catalyzes the attachment of tryptophan to tRNA(Trp). The chain is Tryptophan--tRNA ligase from Vibrio vulnificus (strain CMCP6).